We begin with the raw amino-acid sequence, 228 residues long: RNA chaperone ProQ (228 aa).

Residues 107–178 are disordered; that stretch reads KARVQAQRAE…REEKHTPVSD (72 aa). Composition is skewed to basic and acidic residues over residues 117–136 and 146–175; these read QQAKKREAAAAAGEKEDAPR and RRKEGAERKPRADKPTTKAPRAPREEKHTP.

Belongs to the ProQ family.

Its subcellular location is the cytoplasm. Its function is as follows. RNA chaperone with significant RNA binding, RNA strand exchange and RNA duplexing activities. May regulate ProP activity through an RNA-based, post-transcriptional mechanism. This Salmonella agona (strain SL483) protein is RNA chaperone ProQ.